Here is a 132-residue protein sequence, read N- to C-terminus: Ribonuclease VapC (132 aa).

In terms of domain architecture, PINc spans 4 to 123 (YMLDTNIVIY…SNNLREFERV (120 aa)). Residues Asp7 and Asp98 each coordinate Mg(2+).

It belongs to the PINc/VapC protein family. Probably forms a complex with cognate antitoxin VapB2. Mg(2+) is required as a cofactor.

Functionally, toxic component of a type II toxin-antitoxin (TA) system. Acts as an RNase. Its toxic effect is neutralized by cognate antitoxin VapB2 but not by non-cognate antitoxin VapB1. The protein is Ribonuclease VapC of Haemophilus influenzae (strain 86-028NP).